We begin with the raw amino-acid sequence, 625 residues long: tRNA uridine 5-carboxymethylaminomethyl modification enzyme MnmG (625 aa).

Residues 13 to 18 (GGGHAG), Val125, and Ser182 each bind FAD. 276–290 (GPRYCPSIEDKITRF) lines the NAD(+) pocket. Gln373 lines the FAD pocket.

It belongs to the MnmG family. Homodimer. Heterotetramer of two MnmE and two MnmG subunits. The cofactor is FAD.

It is found in the cytoplasm. Its function is as follows. NAD-binding protein involved in the addition of a carboxymethylaminomethyl (cmnm) group at the wobble position (U34) of certain tRNAs, forming tRNA-cmnm(5)s(2)U34. This Lactococcus lactis subsp. cremoris (strain SK11) protein is tRNA uridine 5-carboxymethylaminomethyl modification enzyme MnmG.